Here is a 108-residue protein sequence, read N- to C-terminus: Tyrosine-protein phosphatase 5 (108 aa).

The Tyrosine-protein phosphatase domain maps to 1 to 108; it reads QESTVIVMLT…QGNNPSPIIV (108 aa). Substrate is bound at residue Asp78.

It belongs to the protein-tyrosine phosphatase family.

The catalysed reaction is O-phospho-L-tyrosyl-[protein] + H2O = L-tyrosyl-[protein] + phosphate. This is Tyrosine-protein phosphatase 5 (STY-5) from Styela plicata (Wrinkled sea squirt).